We begin with the raw amino-acid sequence, 156 residues long: Flagellar assembly factor FliW (156 aa).

It belongs to the FliW family. In terms of assembly, interacts with translational regulator CsrA and flagellin(s).

Its subcellular location is the cytoplasm. Its function is as follows. Acts as an anti-CsrA protein, binds CsrA and prevents it from repressing translation of its target genes, one of which is flagellin. Binds to flagellin and participates in the assembly of the flagellum. The protein is Flagellar assembly factor FliW of Syntrophomonas wolfei subsp. wolfei (strain DSM 2245B / Goettingen).